The sequence spans 397 residues: MKKEKVVLAYSGGLDTSVAIKWLMQKYSLDVITLTVDIGQGINLDEIKNKAENLGVEKAYVLDLKEEFVKDYIIPAIKSNAMYERVYPLATALSRPLIAKYLVKIAKENGAKYVAHGCTGKGNDQVRIDLGVKALAPDLEIIAPVREWNFSREEEIEYALENNIPIPVSRKSPYSIDENLWGRSIEGGILEDPWQEPPEDIYLWTRFENREPSYIEITFERGVPVELNGVRKDVVEIIEELNKIAGSYGIGRIDHIENRLVGIKSREIYEAPAAIVIIRAHEALEDMVLPRELAHYKKMLEDKYAELVYYGLWFDPFREALQAFMDKTQDRVTGKVKIKLLPWSFSIVGRESPYSLYDHGLATYDKGSTFSTESAVGFIKLFGLQNYLYALKGGNND.

9 to 17 (AYSGGLDTS) contributes to the ATP binding site. Y87 contacts L-citrulline. G117 provides a ligand contact to ATP. T119, N123, and D124 together coordinate L-aspartate. Residue N123 coordinates L-citrulline. 5 residues coordinate L-citrulline: R127, S175, S184, E257, and Y269.

The protein belongs to the argininosuccinate synthase family. Type 1 subfamily. As to quaternary structure, homotetramer.

Its subcellular location is the cytoplasm. The catalysed reaction is L-citrulline + L-aspartate + ATP = 2-(N(omega)-L-arginino)succinate + AMP + diphosphate + H(+). The protein operates within amino-acid biosynthesis; L-arginine biosynthesis; L-arginine from L-ornithine and carbamoyl phosphate: step 2/3. In Dictyoglomus thermophilum (strain ATCC 35947 / DSM 3960 / H-6-12), this protein is Argininosuccinate synthase.